Here is a 144-residue protein sequence, read N- to C-terminus: 3-hydroxyacyl-[acyl-carrier-protein] dehydratase FabZ (144 aa).

Residue histidine 51 is part of the active site.

The protein belongs to the thioester dehydratase family. FabZ subfamily.

It is found in the cytoplasm. The enzyme catalyses a (3R)-hydroxyacyl-[ACP] = a (2E)-enoyl-[ACP] + H2O. Functionally, involved in unsaturated fatty acids biosynthesis. Catalyzes the dehydration of short chain beta-hydroxyacyl-ACPs and long chain saturated and unsaturated beta-hydroxyacyl-ACPs. This Clostridium botulinum (strain ATCC 19397 / Type A) protein is 3-hydroxyacyl-[acyl-carrier-protein] dehydratase FabZ.